A 926-amino-acid polypeptide reads, in one-letter code: Armadillo repeat-containing protein 5 (926 aa).

A compositionally biased stretch (low complexity) spans 82-104 (PAPSQAASGSAPSSVASAGSTPG). The disordered stretch occupies residues 82–111 (PAPSQAASGSAPSSVASAGSTPGHAPAAES). ARM repeat units follow at residues 139–179 (GACR…NLAM), 181–221 (PESC…NLAD), 223–263 (PQHR…ELSR), 267–306 (RACAEQLSLGGALGPLVSLASHPKRAIREAAILILANLCA), 307–354 (QGLV…LCRE), 355–399 (AINR…DTGA), and 401–440 (GKLQALGLVPLLARQLCGEAGEEEEEGIEAASWDFPEERT). The residue at position 337 (S337) is a Phosphoserine. The disordered stretch occupies residues 472 to 516 (WSPERCPMPEPSESVSPTPGQTSMSTPRTLRKPGRIPAATPEEPW). Polar residues predominate over residues 484–499 (ESVSPTPGQTSMSTPR). The BTB domain occupies 745 to 813 (PDLHFVLDSG…LHGCRGCGAA (69 aa)).

As to quaternary structure, substrate-recognition component of the BCR(ARMC5) E3 ubiquitin ligase complex, at least composed of CUL3, ARMC5 and RBX1. In terms of processing, ubiquitinated by a BCR (BTB-CUL3-RBX1) E3 ubiquitin ligase complex, leading to its degradation. Deubiquitinated by USP7. As to expression, expression is high in the thymus, stomach, bone marrow and lymphatic tissues (including lymph nodes and intestinal wall). Also expressed in the adrenal gland, skin and in brain structures, with noticeable levels found in the cerebellum.

The protein resides in the nucleus. The protein localises to the chromosome. It is found in the cytoplasm. It participates in protein modification; protein ubiquitination. Functionally, substrate-recognition component of a BCR (BTB-CUL3-RBX1) E3 ubiquitin ligase complex that terminates RNA polymerase II (Pol II) transcription in the promoter-proximal region of genes. The BCR(ARMC5) complex provides a quality checkpoint during transcription elongation by driving premature transcription termination of transcripts that are unfavorably configured for transcriptional elongation: the BCR(ARMC5) complex acts by mediating ubiquitination of Pol II subunit POLR2A phosphorylated at 'Ser-5' of the C-terminal domain (CTD), leading to POLR2A degradation. The BCR(ARMC5) complex acts in parallel of the integrator complex and is specific for RNA Pol II originating from the promoter-proximal zone: it does not ubiquitinate elongation-stalled RNA Pol II. The BCR(ARMC5) complex also acts as a regulator of fatty acid desaturation by mediating ubiquitination and degradation of SCAP-free SREBF1 and SREBF2. Involved in fetal development, T-cell function and adrenal gland growth homeostasis. Plays a role in steroidogenesis, modulates steroidogenic enzymes expression and cortisol production. The chain is Armadillo repeat-containing protein 5 from Mus musculus (Mouse).